We begin with the raw amino-acid sequence, 131 residues long: Profilin-2 (131 aa).

Cysteine 13 and cysteine 115 form a disulfide bridge. An Involved in PIP2 interaction motif is present at residues 81 to 97 (AVIRGKKGSGGITVKKT). Phosphothreonine is present on threonine 111.

It belongs to the profilin family. Occurs in many kinds of cells as a complex with monomeric actin in a 1:1 ratio. Post-translationally, phosphorylated by MAP kinases. Pollen specific.

The protein resides in the cytoplasm. It is found in the cytoskeleton. Functionally, binds to actin and affects the structure of the cytoskeleton. At high concentrations, profilin prevents the polymerization of actin, whereas it enhances it at low concentrations. By binding to PIP2, it inhibits the formation of IP3 and DG. In Zea mays (Maize), this protein is Profilin-2 (PRO2).